The sequence spans 293 residues: MPFVEEEFEILKPTKALFLVRDVLKCSLKEAQRHLDKQRLKQNQQTVRKSQIIQGVVRLIYFKPNEKQEKLVFEAKDFGVFDKPAQIYTHPKGYFYHESLLDCIQSHFGKNAHPAHRLDYETSGLVLAGKTLQSTKDLKALFMQKKVKKTYLALAHGLVDKSIIINKPILTPQNIQKDLRIRSQISPLGKPSITLVEPLSYNPFLDISLLKITPLTGRTHQIRLHLSSVDHRIVGEGLYGVADENAREYLQLKRENNAPTLMLHAASLEFEFKGAHYKIASPMPERFMPFLKD.

The active site involves Asp-119.

This sequence belongs to the pseudouridine synthase RluA family.

The enzyme catalyses a uridine in RNA = a pseudouridine in RNA. This is an uncharacterized protein from Helicobacter pylori (strain J99 / ATCC 700824) (Campylobacter pylori J99).